A 514-amino-acid polypeptide reads, in one-letter code: Cytochrome P450 71AP13 (514 aa).

A helical membrane pass occupies residues 20 to 37 (HSSLFAFSLLILLLKFIY). N-linked (GlcNAc...) asparagine glycosylation is found at Asn-127 and Asn-184. Cys-455 contacts heme.

It belongs to the cytochrome P450 family. The cofactor is heme. As to expression, expressed in fruit kernel, seedlings, leaves and stems.

The protein localises to the membrane. The protein is Cytochrome P450 71AP13 of Prunus mume (Japanese apricot).